The sequence spans 234 residues: Small ribosomal subunit protein uS3 (234 aa).

Positions 39 to 107 (VRDYLKKKLS…PVHVNIEEVR (69 aa)) constitute a KH type-2 domain. The segment at 212–234 (EQPAAAEQEKRGKKSGVKHAAAS) is disordered.

It belongs to the universal ribosomal protein uS3 family. As to quaternary structure, part of the 30S ribosomal subunit. Forms a tight complex with proteins S10 and S14.

Binds the lower part of the 30S subunit head. Binds mRNA in the 70S ribosome, positioning it for translation. The chain is Small ribosomal subunit protein uS3 from Thiobacillus denitrificans (strain ATCC 25259 / T1).